The following is a 401-amino-acid chain: Aspartokinase (401 aa).

This sequence belongs to the aspartokinase family.

The enzyme catalyses L-aspartate + ATP = 4-phospho-L-aspartate + ADP. Its pathway is amino-acid biosynthesis; L-lysine biosynthesis via DAP pathway; (S)-tetrahydrodipicolinate from L-aspartate: step 1/4. It participates in amino-acid biosynthesis; L-methionine biosynthesis via de novo pathway; L-homoserine from L-aspartate: step 1/3. The protein operates within amino-acid biosynthesis; L-threonine biosynthesis; L-threonine from L-aspartate: step 1/5. This Rickettsia conorii (strain ATCC VR-613 / Malish 7) protein is Aspartokinase (lysC).